We begin with the raw amino-acid sequence, 277 residues long: Cis-3,4-dihydrophenanthrene-3,4-diol dehydrogenase (277 aa).

Residues 10-37 (FLTG…TVLD) and Asp60 each bind NAD(+). Ser143 serves as a coordination point for substrate. Tyr156 functions as the Proton acceptor in the catalytic mechanism. An NAD(+)-binding site is contributed by Lys160.

It belongs to the short-chain dehydrogenases/reductases (SDR) family. As to quaternary structure, homotetramer.

It carries out the reaction (3S,4R)-3,4-dihydrophenanthrene-3,4-diol + NAD(+) = phenanthrene-3,4-diol + NADH + H(+). With respect to regulation, inhibited by heavy metal such as Hg(2+) and by p-chloromercuribenzoate. In terms of biological role, involved in the degradation of phenanthrene. Catalyzes the oxidation of cis-phenanthrene dihydrodiol (PDD) to yield phenanthrenediol. It can use either NAD or NADP as electron acceptor, however NAD is preferred to NADP. This chain is Cis-3,4-dihydrophenanthrene-3,4-diol dehydrogenase (phnB), found in Alcaligenes faecalis.